Here is a 171-residue protein sequence, read N- to C-terminus: CDP-archaeol synthase (171 aa).

5 helical membrane-spanning segments follow: residues 7–27 (MFWA…PVLL), 55–75 (FLGG…LTPA), 84–104 (VLLA…GSFI), 115–135 (PAVG…AYPV), and 141–161 (GQML…NYFA).

This sequence belongs to the CDP-archaeol synthase family. Requires Mg(2+) as cofactor.

It is found in the cell membrane. It carries out the reaction 2,3-bis-O-(geranylgeranyl)-sn-glycerol 1-phosphate + CTP + H(+) = CDP-2,3-bis-O-(geranylgeranyl)-sn-glycerol + diphosphate. The protein operates within membrane lipid metabolism; glycerophospholipid metabolism. Its function is as follows. Catalyzes the formation of CDP-2,3-bis-(O-geranylgeranyl)-sn-glycerol (CDP-archaeol) from 2,3-bis-(O-geranylgeranyl)-sn-glycerol 1-phosphate (DGGGP) and CTP. This reaction is the third ether-bond-formation step in the biosynthesis of archaeal membrane lipids. In Thermococcus gammatolerans (strain DSM 15229 / JCM 11827 / EJ3), this protein is CDP-archaeol synthase.